The primary structure comprises 159 residues: NADH-quinone oxidoreductase subunit B (159 aa).

[4Fe-4S] cluster-binding residues include Cys37, Cys38, Cys102, and Cys132.

The protein belongs to the complex I 20 kDa subunit family. NDH-1 is composed of 14 different subunits. Subunits NuoB, C, D, E, F, and G constitute the peripheral sector of the complex. Requires [4Fe-4S] cluster as cofactor.

Its subcellular location is the cell inner membrane. It catalyses the reaction a quinone + NADH + 5 H(+)(in) = a quinol + NAD(+) + 4 H(+)(out). In terms of biological role, NDH-1 shuttles electrons from NADH, via FMN and iron-sulfur (Fe-S) centers, to quinones in the respiratory chain. Couples the redox reaction to proton translocation (for every two electrons transferred, four hydrogen ions are translocated across the cytoplasmic membrane), and thus conserves the redox energy in a proton gradient. The protein is NADH-quinone oxidoreductase subunit B of Vesicomyosocius okutanii subsp. Calyptogena okutanii (strain HA).